The chain runs to 596 residues: Structural protein precursor VP8 (596 aa).

It is found in the virion. 120 subunits of the putative clamp protein VP8b appear to stabilize the capsid shell. The sequence is that of Structural protein precursor VP8 from Oryza latifolia (Indian wild rice).